The primary structure comprises 136 residues: NADPH-dependent 7-cyano-7-deazaguanine reductase (136 aa).

Residue Cys-50 is the Thioimide intermediate of the active site. Asp-57 functions as the Proton donor in the catalytic mechanism. Substrate-binding positions include 72–74 (YEL) and 91–92 (HE).

It belongs to the GTP cyclohydrolase I family. QueF type 1 subfamily.

The protein localises to the cytoplasm. The catalysed reaction is 7-aminomethyl-7-carbaguanine + 2 NADP(+) = 7-cyano-7-deazaguanine + 2 NADPH + 3 H(+). It functions in the pathway tRNA modification; tRNA-queuosine biosynthesis. Its function is as follows. Catalyzes the NADPH-dependent reduction of 7-cyano-7-deazaguanine (preQ0) to 7-aminomethyl-7-deazaguanine (preQ1). The sequence is that of NADPH-dependent 7-cyano-7-deazaguanine reductase from Prochlorococcus marinus (strain MIT 9301).